A 240-amino-acid polypeptide reads, in one-letter code: ATP-dependent dethiobiotin synthetase BioD (240 aa).

13 to 18 is a binding site for ATP; sequence GVGKTI. Thr-17 contacts Mg(2+). The active site involves Lys-38. Substrate is bound at residue Thr-42. Residues Asp-55, 116 to 119, and 214 to 216 contribute to the ATP site; these read EGVG and PYL. 2 residues coordinate Mg(2+): Asp-55 and Glu-116.

It belongs to the dethiobiotin synthetase family. Homodimer. Mg(2+) is required as a cofactor.

It localises to the cytoplasm. It carries out the reaction (7R,8S)-7,8-diammoniononanoate + CO2 + ATP = (4R,5S)-dethiobiotin + ADP + phosphate + 3 H(+). It participates in cofactor biosynthesis; biotin biosynthesis; biotin from 7,8-diaminononanoate: step 1/2. Functionally, catalyzes a mechanistically unusual reaction, the ATP-dependent insertion of CO2 between the N7 and N8 nitrogen atoms of 7,8-diaminopelargonic acid (DAPA, also called 7,8-diammoniononanoate) to form a ureido ring. In Thermodesulfovibrio yellowstonii (strain ATCC 51303 / DSM 11347 / YP87), this protein is ATP-dependent dethiobiotin synthetase BioD.